Consider the following 598-residue polypeptide: Aspartate--tRNA(Asp/Asn) ligase (598 aa).

E174 is an L-aspartate binding site. Residues 198–201 (QQLK) are aspartate. An L-aspartate-binding site is contributed by R220. ATP contacts are provided by residues 220–222 (RDE) and Q229. H458 lines the L-aspartate pocket. E492 provides a ligand contact to ATP. R499 lines the L-aspartate pocket. 544–547 (GIDR) contributes to the ATP binding site.

It belongs to the class-II aminoacyl-tRNA synthetase family. Type 1 subfamily. Homodimer.

The protein localises to the cytoplasm. The catalysed reaction is tRNA(Asx) + L-aspartate + ATP = L-aspartyl-tRNA(Asx) + AMP + diphosphate. In terms of biological role, aspartyl-tRNA synthetase with relaxed tRNA specificity since it is able to aspartylate not only its cognate tRNA(Asp) but also tRNA(Asn). Reaction proceeds in two steps: L-aspartate is first activated by ATP to form Asp-AMP and then transferred to the acceptor end of tRNA(Asp/Asn). The protein is Aspartate--tRNA(Asp/Asn) ligase of Dehalococcoides mccartyi (strain CBDB1).